The primary structure comprises 144 residues: SVVKSEDFSLPAYMDRRDYPLPEVAHVKHLSASQKALKEKEKASWSSLSMDEKVELYRIKFKESFAEMNRGSNEWKTVVGGAMFFIGFTALVIMWQKHYVYGPLPQSFDKEWVAKQTKRMLDMKVNPIQGLASKWDYEKNEWKK.

Over 1–73 the chain is Mitochondrial matrix; it reads SVVKSEDFSL…SFAEMNRGSN (73 aa). Residue Lys-4 is modified to N6-acetyllysine; alternate. Lys-4 is subject to N6-succinyllysine; alternate. N6-acetyllysine is present on Lys-28. Ser-31 and Ser-33 each carry phosphoserine. Lys-35 carries the post-translational modification N6-acetyllysine; alternate. Residue Lys-35 is modified to N6-succinyllysine; alternate. An N6-acetyllysine modification is found at Lys-42. The helical transmembrane segment at 74–99 threads the bilayer; that stretch reads EWKTVVGGAMFFIGFTALVIMWQKHY. Residues 100–144 are Mitochondrial intermembrane-facing; that stretch reads VYGPLPQSFDKEWVAKQTKRMLDMKVNPIQGLASKWDYEKNEWKK.

Belongs to the cytochrome c oxidase IV family. Component of the cytochrome c oxidase (complex IV, CIV), a multisubunit enzyme composed of 14 subunits. The complex is composed of a catalytic core of 3 subunits MT-CO1, MT-CO2 and MT-CO3, encoded in the mitochondrial DNA, and 11 supernumerary subunits COX4I, COX5A, COX5B, COX6A, COX6B, COX6C, COX7A, COX7B, COX7C, COX8 and NDUFA4, which are encoded in the nuclear genome. The complex exists as a monomer or a dimer and forms supercomplexes (SCs) in the inner mitochondrial membrane with NADH-ubiquinone oxidoreductase (complex I, CI) and ubiquinol-cytochrome c oxidoreductase (cytochrome b-c1 complex, complex III, CIII), resulting in different assemblies (supercomplex SCI(1)III(2)IV(1) and megacomplex MCI(2)III(2)IV(2)). Interacts with PHB2; the interaction decreases in absence of SPHK2. Interacts with AFG1L. Interacts with ABCB7; this interaction allows the regulation of cellular iron homeostasis and cellular reactive oxygen species (ROS) levels in cardiomyocytes. Interacts with FLVCR2; this interaction occurs in the absence of heme and is disrupted upon heme binding. Interacts with IRGC.

The protein localises to the mitochondrion inner membrane. Its pathway is energy metabolism; oxidative phosphorylation. Functionally, component of the cytochrome c oxidase, the last enzyme in the mitochondrial electron transport chain which drives oxidative phosphorylation. The respiratory chain contains 3 multisubunit complexes succinate dehydrogenase (complex II, CII), ubiquinol-cytochrome c oxidoreductase (cytochrome b-c1 complex, complex III, CIII) and cytochrome c oxidase (complex IV, CIV), that cooperate to transfer electrons derived from NADH and succinate to molecular oxygen, creating an electrochemical gradient over the inner membrane that drives transmembrane transport and the ATP synthase. Cytochrome c oxidase is the component of the respiratory chain that catalyzes the reduction of oxygen to water. Electrons originating from reduced cytochrome c in the intermembrane space (IMS) are transferred via the dinuclear copper A center (CU(A)) of subunit 2 and heme A of subunit 1 to the active site in subunit 1, a binuclear center (BNC) formed by heme A3 and copper B (CU(B)). The BNC reduces molecular oxygen to 2 water molecules using 4 electrons from cytochrome c in the IMS and 4 protons from the mitochondrial matrix. In Gorilla gorilla gorilla (Western lowland gorilla), this protein is Cytochrome c oxidase subunit 4 isoform 1, mitochondrial (COX4I1).